A 314-amino-acid chain; its full sequence is Lipoyl synthase (314 aa).

A disordered region spans residues 1-24; sequence MMDTPIIRHPEKVRRPDNPSPRKP. The [4Fe-4S] cluster site is built by cysteine 53, cysteine 58, cysteine 64, cysteine 79, cysteine 83, cysteine 86, and serine 293. One can recognise a Radical SAM core domain in the interval 65-282; the sequence is WKRRHATFMI…ADIARGKGFL (218 aa). Residues 294–308 show a composition bias toward basic and acidic residues; sequence HHADRDFEDLRKARQ. The tract at residues 294 to 314 is disordered; that stretch reads HHADRDFEDLRKARQDAAATK.

It belongs to the radical SAM superfamily. Lipoyl synthase family. Requires [4Fe-4S] cluster as cofactor.

It localises to the cytoplasm. The enzyme catalyses [[Fe-S] cluster scaffold protein carrying a second [4Fe-4S](2+) cluster] + N(6)-octanoyl-L-lysyl-[protein] + 2 oxidized [2Fe-2S]-[ferredoxin] + 2 S-adenosyl-L-methionine + 4 H(+) = [[Fe-S] cluster scaffold protein] + N(6)-[(R)-dihydrolipoyl]-L-lysyl-[protein] + 4 Fe(3+) + 2 hydrogen sulfide + 2 5'-deoxyadenosine + 2 L-methionine + 2 reduced [2Fe-2S]-[ferredoxin]. The protein operates within protein modification; protein lipoylation via endogenous pathway; protein N(6)-(lipoyl)lysine from octanoyl-[acyl-carrier-protein]: step 2/2. Catalyzes the radical-mediated insertion of two sulfur atoms into the C-6 and C-8 positions of the octanoyl moiety bound to the lipoyl domains of lipoate-dependent enzymes, thereby converting the octanoylated domains into lipoylated derivatives. This chain is Lipoyl synthase, found in Rhodospirillum rubrum (strain ATCC 11170 / ATH 1.1.1 / DSM 467 / LMG 4362 / NCIMB 8255 / S1).